We begin with the raw amino-acid sequence, 293 residues long: Glycine--tRNA ligase alpha subunit (293 aa).

Belongs to the class-II aminoacyl-tRNA synthetase family. Tetramer of two alpha and two beta subunits.

Its subcellular location is the cytoplasm. The enzyme catalyses tRNA(Gly) + glycine + ATP = glycyl-tRNA(Gly) + AMP + diphosphate. In Oceanobacillus iheyensis (strain DSM 14371 / CIP 107618 / JCM 11309 / KCTC 3954 / HTE831), this protein is Glycine--tRNA ligase alpha subunit.